The sequence spans 335 residues: Avermitilol synthase (335 aa).

5 residues coordinate Mg(2+): D80, D84, N219, S223, and E227. The DDXXD motif motif lies at 80–84 (DDQFD).

Belongs to the terpene synthase family. The cofactor is Mg(2+).

The catalysed reaction is (2E,6E)-farnesyl diphosphate + H2O = avermitilol + diphosphate. Catalyzes the cyclization of farnesyl diphosphate to avermitilol. This Streptomyces avermitilis (strain ATCC 31267 / DSM 46492 / JCM 5070 / NBRC 14893 / NCIMB 12804 / NRRL 8165 / MA-4680) protein is Avermitilol synthase (tpc1).